We begin with the raw amino-acid sequence, 133 residues long: Sporulation-specific protein 2 (133 aa).

This sequence belongs to the VPS13 family. In terms of assembly, interacts with spo13 and spo15.

Its subcellular location is the cytoplasm. It is found in the cytoskeleton. The protein resides in the microtubule organizing center. It localises to the spindle pole body. Functionally, involved in sporulation. Plays a significant role in modification of the spindle pole body prior to spore formation and is required for initiating forespore membrane formation. Assists in the localization of spo13 to the outer surface of the SPB. The sequence is that of Sporulation-specific protein 2 (spo2) from Schizosaccharomyces pombe (strain 972 / ATCC 24843) (Fission yeast).